Here is a 311-residue protein sequence, read N- to C-terminus: Olfactory receptor 287 (311 aa).

Over 1-27 (MAWSTGQNLSTPGPFILLGFPGPRSMR) the chain is Extracellular. N-linked (GlcNAc...) asparagine glycosylation occurs at Asn-8. The helical transmembrane segment at 28 to 53 (IGLFLLFLVMYLLTVVGNLAIISLVG) threads the bilayer. Residues 54–60 (AHRCLQT) are Cytoplasmic-facing. The chain crosses the membrane as a helical span at residues 61–82 (PMYFFLCNLSFLEIWFTTACVP). Residues 83-103 (KTLATFAPRGGVISLAGCATQ) are Extracellular-facing. Cys-100 and Cys-192 form a disulfide bridge. The chain crosses the membrane as a helical span at residues 104–123 (MYFVFSLGCTEYFLLAVMAY). Over 124-142 (DRYLAICLPLRYGGIMTPG) the chain is Cytoplasmic. A helical membrane pass occupies residues 143–161 (LAMRLALGSWLCGFSAITV). Topologically, residues 162–199 (PATLIARLSFCGSRVINHFFCDISPWIVLSCTDTQVVE) are extracellular. A helical transmembrane segment spans residues 200–222 (LVSFGIAFCVILGSCGITLVSYA). Residues 223-239 (YIITTIIKIPSARGRHR) are Cytoplasmic-facing. A helical membrane pass occupies residues 240-263 (AFSTCSSHLTVVLIWYGSTIFLHV). The Extracellular portion of the chain corresponds to 264-275 (RTSVESSLDLTK). The helical transmembrane segment at 276–295 (AITVLNTIVTPVLNPFIYTL) threads the bilayer. At 296–311 (RNKDVKEALRRTVKGK) the chain is on the cytoplasmic side.

The protein belongs to the G-protein coupled receptor 1 family. In terms of tissue distribution, olfactory epithelium.

It localises to the cell membrane. Odorant receptor. The polypeptide is Olfactory receptor 287 (Olr287) (Rattus norvegicus (Rat)).